Here is a 143-residue protein sequence, read N- to C-terminus: uncharacterized protein (143 aa).

It belongs to the SufE family.

This is an uncharacterized protein from Mycobacterium tuberculosis (strain CDC 1551 / Oshkosh).